The following is a 969-amino-acid chain: Isoleucine--tRNA ligase (969 aa).

The 'HIGH' region signature appears at 70–80; it reads PYANGAIHIGH. Glu-601 is an L-isoleucyl-5'-AMP binding site. The short motif at 642-646 is the 'KMSKS' region element; that stretch reads KMSKS. Lys-645 provides a ligand contact to ATP.

It belongs to the class-I aminoacyl-tRNA synthetase family. IleS type 1 subfamily. In terms of assembly, monomer.

It localises to the cytoplasm. It carries out the reaction tRNA(Ile) + L-isoleucine + ATP = L-isoleucyl-tRNA(Ile) + AMP + diphosphate. Functionally, catalyzes the attachment of isoleucine to tRNA(Ile). As IleRS can inadvertently accommodate and process structurally similar amino acids such as valine, to avoid such errors it has two additional distinct tRNA(Ile)-dependent editing activities. One activity is designated as 'pretransfer' editing and involves the hydrolysis of activated Val-AMP. The other activity is designated 'posttransfer' editing and involves deacylation of mischarged Val-tRNA(Ile). In Caulobacter vibrioides (strain ATCC 19089 / CIP 103742 / CB 15) (Caulobacter crescentus), this protein is Isoleucine--tRNA ligase.